The following is a 547-amino-acid chain: Large cysteine-rich periplasmic protein OmcB (547 aa).

An N-terminal signal peptide occupies residues 1 to 22 (MNKLIRRAVTIFAVTSVASLFA). A propeptide spanning residues 23-40 (SGVLETSMAESLSTNVIS) is cleaved from the precursor. The disordered stretch occupies residues 45–84 (KAKDNTSHKSKKARKNHSKETPVDRKEVAPVHESKATGPK). Residues 52–61 (HKSKKARKNH) are compositionally biased toward basic residues. A compositionally biased stretch (basic and acidic residues) spans 62-79 (SKETPVDRKEVAPVHESK).

Part of a disulfide cross-linked outer membrane complex (COMC) composed of the major outer membrane porin (MOMP), the small cysteine-rich protein (OmcA) and the large cysteine-rich periplasmic protein (OmcB).

Its subcellular location is the periplasm. Its function is as follows. In elementary bodies (EBs, the infectious stage, which is able to survive outside the host cell) provides the structural integrity of the outer envelope through disulfide cross-links with the small cysteine-rich protein and the major outer membrane protein. It has been described in publications as the Sarkosyl-insoluble COMC (Chlamydia outer membrane complex), and serves as the functional equivalent of peptidoglycan. This is Large cysteine-rich periplasmic protein OmcB (omcB) from Chlamydia trachomatis serovar D (strain ATCC VR-885 / DSM 19411 / UW-3/Cx).